A 915-amino-acid chain; its full sequence is Probable LRR receptor-like serine/threonine-protein kinase At2g16250 (915 aa).

The first 28 residues, 1–28, serve as a signal peptide directing secretion; sequence MVDQRRSALGFVLLLLCLVLFFDCVVVG. The Extracellular segment spans residues 29–451; it reads QTQSRFSEKL…ISRRTVIILA (423 aa). N-linked (GlcNAc...) asparagine glycans are attached at residues N71, N78, N101, N109, N150, N158, and N177. LRR repeat units lie at residues 102–125, 127–150, 151–174, 176–198, 199–223, 225–247, 248–271, 272–295, 297–320, 321–344, and 366–390; these read LTRLSYFNASGLALPGTIPEWFGV, LLALEVLDLSSCSVNGVVPFTLGN, LTSLRTLNLSQNSLTSLVPSSLGQ, LNLSQLDLSRNSFTGVLPQSFSS, LKNLLTLDVSSNYLTGPIPPGLGAL, KLIHLNFSSNSFSSPIPSELGDL, VNLVDFDLSINSLSGSVPQELRKL, SKLQLMAIGDNLLSGTLPVDLFSA, SQLQTLVLRENGFSGSLPDVCWSL, PKLRILDIAKNNFTGLLPYSSYDS, and LRRFRIMDLSGNYFEGKLPDYVTGE. N230 carries an N-linked (GlcNAc...) asparagine glycan. N332 carries N-linked (GlcNAc...) asparagine glycosylation. 3 N-linked (GlcNAc...) asparagine glycosylation sites follow: N391, N429, and N437. The chain crosses the membrane as a helical span at residues 452-472; it reads AVGGGVAFILLFVILPIILVL. Over 473–915 the chain is Cytoplasmic; that stretch reads CMRHRRRAAQ…AAYGVVEDNL (443 aa). Residues 482–503 form a disordered region; that stretch reads QRGNNDRPKPAGEASQQPPKGA. The Protein kinase domain maps to 527–811; it reads FNDANLIKRG…IVNALENPLK (285 aa). Residues 533 to 541 and K555 contribute to the ATP site; that span reads IKRGHSGNL. D657 (proton acceptor) is an active-site residue. The segment at 851–915 is disordered; that stretch reads TAVQAGATTS…AAYGVVEDNL (65 aa). Gly residues predominate over residues 859–870; the sequence is TSGGGGGGGGNG. The span at 871-892 shows a compositional bias: low complexity; sequence LRNSGSQGSSGRNNNNNGNSSS.

Belongs to the protein kinase superfamily. Ser/Thr protein kinase family.

It localises to the membrane. The enzyme catalyses L-seryl-[protein] + ATP = O-phospho-L-seryl-[protein] + ADP + H(+). The catalysed reaction is L-threonyl-[protein] + ATP = O-phospho-L-threonyl-[protein] + ADP + H(+). The protein is Probable LRR receptor-like serine/threonine-protein kinase At2g16250 of Arabidopsis thaliana (Mouse-ear cress).